The primary structure comprises 220 residues: Protein-L-isoaspartate O-methyltransferase (220 aa).

The active site involves Ser-64.

This sequence belongs to the methyltransferase superfamily. L-isoaspartyl/D-aspartyl protein methyltransferase family.

Its subcellular location is the cytoplasm. The enzyme catalyses [protein]-L-isoaspartate + S-adenosyl-L-methionine = [protein]-L-isoaspartate alpha-methyl ester + S-adenosyl-L-homocysteine. Catalyzes the methyl esterification of L-isoaspartyl residues in peptides and proteins that result from spontaneous decomposition of normal L-aspartyl and L-asparaginyl residues. It plays a role in the repair and/or degradation of damaged proteins. This Thermococcus onnurineus (strain NA1) protein is Protein-L-isoaspartate O-methyltransferase.